Reading from the N-terminus, the 621-residue chain is uncharacterized protein (621 aa).

Composition is skewed to low complexity over residues 1 to 10 (MIEDNINNNE), 63 to 79 (TEPLTTQLSSSPTTTPS), 137 to 182 (NNNN…NNFN), and 309 to 347 (NQSIQQLQQQQQQQQQQQQQQNNNDNNNNNNNNNNNNNN). 7 disordered regions span residues 1 to 29 (MIEDNINNNENENEDKNGNGNENENDKNN), 63 to 100 (TEPLTTQLSSSPTTTPSLKKRKPKTVRNPFIGPSSNKT), 135 to 194 (DDNN…KDND), 307 to 374 (KTNQ…EDDT), 430 to 471 (YNNN…IAKR), 492 to 539 (KQSQ…IKII), and 594 to 614 (PTQINSNSSNNIVSPSSSPSK). Over residues 348 to 357 (STLTSSNSLS) the composition is skewed to polar residues. Composition is skewed to low complexity over residues 431–459 (NNNNNNNNNNNNNNNNNNNNNNNNNNNNN), 496–539 (NNNN…IKII), and 597–613 (INSNSSNNIVSPSSSPS).

This is an uncharacterized protein from Dictyostelium discoideum (Social amoeba).